Consider the following 637-residue polypeptide: Early transcription factor 70 kDa subunit (637 aa).

This sequence belongs to the helicase family. VETF subfamily. In terms of assembly, heterodimer of a 70 kDa and a 82 kDa subunit. Part of the early transcription complex composed of ETF, RAP94/OPG109, and the DNA-directed RNA polymerase. In terms of processing, apparently non-glycosylated.

It is found in the virion. In terms of biological role, acts with RNA polymerase to initiate transcription from early gene promoters. Is recruited by the RPO-associated protein of 94 kDa RAP94/OPG109 to form the early transcription complex, which also contains the core RNA polymerase. ETF heterodimer binds to early gene promoters. This Monkeypox virus protein is Early transcription factor 70 kDa subunit (OPG118).